The following is a 472-amino-acid chain: UDP-N-acetylmuramate--L-alanine ligase (472 aa).

121–127 (GTHGKTT) is an ATP binding site.

This sequence belongs to the MurCDEF family.

Its subcellular location is the cytoplasm. It carries out the reaction UDP-N-acetyl-alpha-D-muramate + L-alanine + ATP = UDP-N-acetyl-alpha-D-muramoyl-L-alanine + ADP + phosphate + H(+). It participates in cell wall biogenesis; peptidoglycan biosynthesis. Cell wall formation. This Hahella chejuensis (strain KCTC 2396) protein is UDP-N-acetylmuramate--L-alanine ligase.